Reading from the N-terminus, the 288-residue chain is 4-hydroxybenzoate octaprenyltransferase (288 aa).

Helical transmembrane passes span Ile23 to Ile43, Ala46 to Val66, Ile98 to Thr118, Leu141 to Val161, Glu163 to Tyr183, Leu213 to Met233, Asn234 to Gln254, and Ala268 to Trp288.

This sequence belongs to the UbiA prenyltransferase family. The cofactor is Mg(2+).

It localises to the cell inner membrane. It catalyses the reaction all-trans-octaprenyl diphosphate + 4-hydroxybenzoate = 4-hydroxy-3-(all-trans-octaprenyl)benzoate + diphosphate. It participates in cofactor biosynthesis; ubiquinone biosynthesis. Functionally, catalyzes the prenylation of para-hydroxybenzoate (PHB) with an all-trans polyprenyl group. Mediates the second step in the final reaction sequence of ubiquinone-8 (UQ-8) biosynthesis, which is the condensation of the polyisoprenoid side chain with PHB, generating the first membrane-bound Q intermediate 3-octaprenyl-4-hydroxybenzoate. This is 4-hydroxybenzoate octaprenyltransferase from Yersinia pseudotuberculosis serotype O:1b (strain IP 31758).